Reading from the N-terminus, the 56-residue chain is Large ribosomal subunit protein bL33B (56 aa).

This sequence belongs to the bacterial ribosomal protein bL33 family.

The sequence is that of Large ribosomal subunit protein bL33B from Cutibacterium acnes (strain DSM 16379 / KPA171202) (Propionibacterium acnes).